A 302-amino-acid chain; its full sequence is N-acetylmuramic acid 6-phosphate etherase (302 aa).

Residues 58–221 (IGESFLNGGR…STGAMVKTGK (164 aa)) form the SIS domain. Glu86 serves as the catalytic Proton donor. Glu117 is an active-site residue.

The protein belongs to the GCKR-like family. MurNAc-6-P etherase subfamily. In terms of assembly, homodimer.

The catalysed reaction is N-acetyl-D-muramate 6-phosphate + H2O = N-acetyl-D-glucosamine 6-phosphate + (R)-lactate. Its pathway is amino-sugar metabolism; N-acetylmuramate degradation. Its function is as follows. Specifically catalyzes the cleavage of the D-lactyl ether substituent of MurNAc 6-phosphate, producing GlcNAc 6-phosphate and D-lactate. This is N-acetylmuramic acid 6-phosphate etherase from Clostridium botulinum (strain Langeland / NCTC 10281 / Type F).